The chain runs to 464 residues: ATP synthase subunit beta (464 aa).

Gly-152–Thr-159 provides a ligand contact to ATP.

The protein belongs to the ATPase alpha/beta chains family. F-type ATPases have 2 components, CF(1) - the catalytic core - and CF(0) - the membrane proton channel. CF(1) has five subunits: alpha(3), beta(3), gamma(1), delta(1), epsilon(1). CF(0) has three main subunits: a(1), b(2) and c(9-12). The alpha and beta chains form an alternating ring which encloses part of the gamma chain. CF(1) is attached to CF(0) by a central stalk formed by the gamma and epsilon chains, while a peripheral stalk is formed by the delta and b chains.

It localises to the cell membrane. The enzyme catalyses ATP + H2O + 4 H(+)(in) = ADP + phosphate + 5 H(+)(out). Functionally, produces ATP from ADP in the presence of a proton gradient across the membrane. The catalytic sites are hosted primarily by the beta subunits. This is ATP synthase subunit beta from Ureaplasma urealyticum serovar 10 (strain ATCC 33699 / Western).